Consider the following 34-residue polypeptide: Photosystem II reaction center protein T (34 aa).

The helical transmembrane segment at 3 to 23 (ALVYTFLLVGTLGIIFFAIFF) threads the bilayer.

It belongs to the PsbT family. As to quaternary structure, PSII is composed of 1 copy each of membrane proteins PsbA, PsbB, PsbC, PsbD, PsbE, PsbF, PsbH, PsbI, PsbJ, PsbK, PsbL, PsbM, PsbT, PsbY, PsbZ, Psb30/Ycf12, at least 3 peripheral proteins of the oxygen-evolving complex and a large number of cofactors. It forms dimeric complexes.

It is found in the plastid. Its subcellular location is the chloroplast thylakoid membrane. Functionally, found at the monomer-monomer interface of the photosystem II (PS II) dimer, plays a role in assembly and dimerization of PSII. PSII is a light-driven water plastoquinone oxidoreductase, using light energy to abstract electrons from H(2)O, generating a proton gradient subsequently used for ATP formation. In Klebsormidium bilatum (Filamentous green alga), this protein is Photosystem II reaction center protein T.